Reading from the N-terminus, the 347-residue chain is D-alanine--D-alanine ligase (347 aa).

Residues 131 to 333 (KRVLESAGIA…YPELIERLVD (203 aa)) form the ATP-grasp domain. Residue 161–216 (EEKLAYPVFTKPSNMGSSVGISKSENQEELRQALKLAFRYDSRVLVEQGVNAREIE) coordinates ATP. Mg(2+)-binding residues include Asp-287, Glu-300, and Asn-302.

The protein belongs to the D-alanine--D-alanine ligase family. Requires Mg(2+) as cofactor. Mn(2+) is required as a cofactor.

Its subcellular location is the cytoplasm. It catalyses the reaction 2 D-alanine + ATP = D-alanyl-D-alanine + ADP + phosphate + H(+). Its pathway is cell wall biogenesis; peptidoglycan biosynthesis. In terms of biological role, cell wall formation. The polypeptide is D-alanine--D-alanine ligase (Streptococcus pneumoniae (strain ATCC BAA-255 / R6)).